The sequence spans 652 residues: DNA ligase (652 aa).

Residues 29 to 33, 78 to 79, and glutamate 107 contribute to the NAD(+) site; these read DAEYD and SL. The N6-AMP-lysine intermediate role is filled by lysine 109. Residues arginine 130, glutamate 164, lysine 278, and lysine 302 each coordinate NAD(+). Residues cysteine 395, cysteine 398, cysteine 413, and cysteine 418 each coordinate Zn(2+). Residues 577–652 form the BRCT domain; sequence DENAALSGMT…IKDEAWLESL (76 aa).

The protein belongs to the NAD-dependent DNA ligase family. LigA subfamily. It depends on Mg(2+) as a cofactor. Mn(2+) is required as a cofactor.

The enzyme catalyses NAD(+) + (deoxyribonucleotide)n-3'-hydroxyl + 5'-phospho-(deoxyribonucleotide)m = (deoxyribonucleotide)n+m + AMP + beta-nicotinamide D-nucleotide.. Functionally, DNA ligase that catalyzes the formation of phosphodiester linkages between 5'-phosphoryl and 3'-hydroxyl groups in double-stranded DNA using NAD as a coenzyme and as the energy source for the reaction. It is essential for DNA replication and repair of damaged DNA. This Streptococcus suis (strain 05ZYH33) protein is DNA ligase.